The following is a 340-amino-acid chain: Entry-fusion complex protein OPG094 (340 aa).

The segment at 1 to 20 (MGGGVSVELPKRDPPPGVPT) is disordered. A lipid anchor (N-myristoyl glycine; by host) is attached at Gly2. The Virion surface segment spans residues 2-319 (GGGVSVELPK…VQHNIKHSFD (318 aa)). Residues 320-340 (LKLHLISLLSLLVIWILIVAI) traverse the membrane as a helical; Signal-anchor for type II membrane protein segment.

Belongs to the orthopoxvirus OPG086 family. In terms of assembly, interacts with OPG143. Component of the entry fusion complex (EFC) composed of OPG053, OPG076, OPG086, OPG094, OPG095, OPG099, OPG107, OPG143, OPG104, OPG147 and OPG155. Except for OPG095 and OPG053, each of the EFC proteins is required for assembly or stability of the complex. Post-translationally, unglycosylated because produced in viral factories instead of the classic ER -Golgi route.

The protein resides in the virion membrane. Component of the entry fusion complex (EFC), which consists of 11 proteins. During cell infection, this complex mediates entry of the virion core into the host cytoplasm by a two-step mechanism consisting of lipid mixing of the viral and cellular membranes and subsequent pore formation. In Homo sapiens (Human), this protein is Entry-fusion complex protein OPG094 (OPG094).